The chain runs to 237 residues: uncharacterized protein (237 aa).

Residue 50 to 57 (APPGTGKS) participates in ATP binding.

This is an uncharacterized protein from Escherichia coli (strain K12).